The sequence spans 747 residues: Small G protein signaling modulator 3 (747 aa).

In terms of domain architecture, Rab-GAP TBC spans 111–302 (GVPHSMRPQL…RLWDLFFYEG (192 aa)). Serine 403 is subject to Phosphoserine. The stretch at 412-435 (EDDLEAMKAKNIKQTELVADLREA) forms a coiled coil. The 60-residue stretch at 477 to 536 (GHPRRAKALLDFERHDDDELGFRKNDIITIVSQKDEHCWVGELNGLRGWFPAKFVEVLDE) folds into the SH3 domain. Positions 552–715 (GVTDLVRGTL…FAFSLSQDWE (164 aa)) constitute an RUN domain.

It belongs to the small G protein signaling modulator family. In terms of assembly, interacts with GJA1. Interaction with GJA1 induces its degradation. Interacts via its RUN domain with the C-terminal region of NF2. Interacts with RAB3A, RAB4A, RAB5A, RAB8A, RAB11A, RAP1A, RAP1B, RAP2A, RAP2B and PDCD6I. No interaction with RAB27A.

Its subcellular location is the cytoplasm. Its function is as follows. May play a cooperative role in NF2-mediated growth suppression of cells. This Bos taurus (Bovine) protein is Small G protein signaling modulator 3.